A 110-amino-acid polypeptide reads, in one-letter code: Large ribosomal subunit protein uL24 (110 aa).

This sequence belongs to the universal ribosomal protein uL24 family. In terms of assembly, part of the 50S ribosomal subunit.

In terms of biological role, one of two assembly initiator proteins, it binds directly to the 5'-end of the 23S rRNA, where it nucleates assembly of the 50S subunit. Its function is as follows. One of the proteins that surrounds the polypeptide exit tunnel on the outside of the subunit. This is Large ribosomal subunit protein uL24 from Caldicellulosiruptor saccharolyticus (strain ATCC 43494 / DSM 8903 / Tp8T 6331).